The chain runs to 344 residues: 2,3,4,5-tetrahydropyridine-2,6-dicarboxylate N-succinyltransferase (344 aa).

E205 provides a ligand contact to Mg(2+). E221 serves as the catalytic Acyl-anhydride intermediate. Residues R223, G238, S241, A264, 279-280 (EA), G287, K304, and 317-320 (RRNS) each bind succinyl-CoA.

The protein belongs to the type 2 tetrahydrodipicolinate N-succinyltransferase family. Homotrimer.

The protein localises to the cytoplasm. The catalysed reaction is (S)-2,3,4,5-tetrahydrodipicolinate + succinyl-CoA + H2O = (S)-2-succinylamino-6-oxoheptanedioate + CoA. It functions in the pathway amino-acid biosynthesis; L-lysine biosynthesis via DAP pathway; LL-2,6-diaminopimelate from (S)-tetrahydrodipicolinate (succinylase route): step 1/3. Catalyzes the conversion of the cyclic tetrahydrodipicolinate (THDP) into the acyclic N-succinyl-L-2-amino-6-oxopimelate using succinyl-CoA. The protein is 2,3,4,5-tetrahydropyridine-2,6-dicarboxylate N-succinyltransferase of Pseudomonas paraeruginosa (strain DSM 24068 / PA7) (Pseudomonas aeruginosa (strain PA7)).